We begin with the raw amino-acid sequence, 279 residues long: Diaminopimelate epimerase (279 aa).

Substrate-binding residues include N13 and N66. C75 serves as the catalytic Proton donor. Substrate-binding positions include 76–77 (GN), N162, N195, and 213–214 (ER). C222 serves as the catalytic Proton acceptor. Residue 223–224 (GT) coordinates substrate.

The protein belongs to the diaminopimelate epimerase family. In terms of assembly, homodimer.

It localises to the cytoplasm. It carries out the reaction (2S,6S)-2,6-diaminopimelate = meso-2,6-diaminopimelate. It functions in the pathway amino-acid biosynthesis; L-lysine biosynthesis via DAP pathway; DL-2,6-diaminopimelate from LL-2,6-diaminopimelate: step 1/1. Functionally, catalyzes the stereoinversion of LL-2,6-diaminopimelate (L,L-DAP) to meso-diaminopimelate (meso-DAP), a precursor of L-lysine and an essential component of the bacterial peptidoglycan. The polypeptide is Diaminopimelate epimerase (Synechocystis sp. (strain ATCC 27184 / PCC 6803 / Kazusa)).